Reading from the N-terminus, the 304-residue chain is Protein ML (304 aa).

Its function is as follows. Blocks host IRF3 and IRF7, thereby inhibiting IFN-beta expression and activation of host antiviral state. This Thogoto virus (isolate SiAr 126) (Tho) protein is Protein ML.